The chain runs to 384 residues: S-adenosylmethionine synthase (384 aa).

Position 15 (histidine 15) interacts with ATP. Aspartate 17 lines the Mg(2+) pocket. Glutamate 43 contributes to the K(+) binding site. Residues glutamate 56 and glutamine 99 each contribute to the L-methionine site. The flexible loop stretch occupies residues 99–109; the sequence is QSPDINQGVDR. ATP is bound by residues 164–166, 230–231, aspartate 239, 245–246, alanine 262, and lysine 266; these read DAK, RF, and RK. Aspartate 239 serves as a coordination point for L-methionine. Lysine 270 is a binding site for L-methionine.

It belongs to the AdoMet synthase family. Homotetramer; dimer of dimers. Requires Mg(2+) as cofactor. It depends on K(+) as a cofactor.

It is found in the cytoplasm. The enzyme catalyses L-methionine + ATP + H2O = S-adenosyl-L-methionine + phosphate + diphosphate. It functions in the pathway amino-acid biosynthesis; S-adenosyl-L-methionine biosynthesis; S-adenosyl-L-methionine from L-methionine: step 1/1. Its function is as follows. Catalyzes the formation of S-adenosylmethionine (AdoMet) from methionine and ATP. The overall synthetic reaction is composed of two sequential steps, AdoMet formation and the subsequent tripolyphosphate hydrolysis which occurs prior to release of AdoMet from the enzyme. The protein is S-adenosylmethionine synthase of Klebsiella pneumoniae subsp. pneumoniae (strain ATCC 700721 / MGH 78578).